The following is a 538-amino-acid chain: ATP synthase subunit beta 2 (538 aa).

Positions 1-10 are enriched in polar residues; that stretch reads MADPQATNGT. The segment at 1–30 is disordered; that stretch reads MADPQATNGTGAACAERDASDVGDVSDVGD. 185-192 serves as a coordination point for ATP; the sequence is GGAGVGKT. Positions 494-505 are enriched in basic and acidic residues; that stretch reads AAAREADARREA. The disordered stretch occupies residues 494 to 538; it reads AAAREADARREAAAAASVAGPGTTSGTTSDPASGSAEPQGARHGR. Over residues 506 to 529 the composition is skewed to low complexity; it reads AAAASVAGPGTTSGTTSDPASGSA.

The protein belongs to the ATPase alpha/beta chains family. F-type ATPases have 2 components, CF(1) - the catalytic core - and CF(0) - the membrane proton channel. CF(1) has five subunits: alpha(3), beta(3), gamma(1), delta(1), epsilon(1). CF(0) has three main subunits: a(1), b(2) and c(9-12). The alpha and beta chains form an alternating ring which encloses part of the gamma chain. CF(1) is attached to CF(0) by a central stalk formed by the gamma and epsilon chains, while a peripheral stalk is formed by the delta and b chains.

The protein localises to the cell inner membrane. The catalysed reaction is ATP + H2O + 4 H(+)(in) = ADP + phosphate + 5 H(+)(out). Its function is as follows. Produces ATP from ADP in the presence of a proton gradient across the membrane. The catalytic sites are hosted primarily by the beta subunits. The chain is ATP synthase subunit beta 2 from Burkholderia pseudomallei (strain K96243).